The following is a 475-amino-acid chain: Aspartyl/glutamyl-tRNA(Asn/Gln) amidotransferase subunit B (475 aa).

The protein belongs to the GatB/GatE family. GatB subfamily. In terms of assembly, heterotrimer of A, B and C subunits.

It catalyses the reaction L-glutamyl-tRNA(Gln) + L-glutamine + ATP + H2O = L-glutaminyl-tRNA(Gln) + L-glutamate + ADP + phosphate + H(+). The enzyme catalyses L-aspartyl-tRNA(Asn) + L-glutamine + ATP + H2O = L-asparaginyl-tRNA(Asn) + L-glutamate + ADP + phosphate + 2 H(+). Allows the formation of correctly charged Asn-tRNA(Asn) or Gln-tRNA(Gln) through the transamidation of misacylated Asp-tRNA(Asn) or Glu-tRNA(Gln) in organisms which lack either or both of asparaginyl-tRNA or glutaminyl-tRNA synthetases. The reaction takes place in the presence of glutamine and ATP through an activated phospho-Asp-tRNA(Asn) or phospho-Glu-tRNA(Gln). The polypeptide is Aspartyl/glutamyl-tRNA(Asn/Gln) amidotransferase subunit B (Chlorobium phaeobacteroides (strain BS1)).